We begin with the raw amino-acid sequence, 679 residues long: UvrABC system protein B (679 aa).

Residues 25–176 (YGVNQGKQYQ…NVRESLRELV (152 aa)) form the Helicase ATP-binding domain. 38–45 (GATGTGKT) provides a ligand contact to ATP. Residues 91-114 (YYDYYQPEAYVPVSDTYIAKTSSV) carry the Beta-hairpin motif. A Helicase C-terminal domain is found at 429–591 (QIDDLLDEIR…IIPKPAGKKP (163 aa)). A UVR domain is found at 639–674 (PEIIDKLEGKMNLAAEELDFEQAAKLRDRIRQLRKK).

This sequence belongs to the UvrB family. In terms of assembly, forms a heterotetramer with UvrA during the search for lesions. Interacts with UvrC in an incision complex.

The protein localises to the cytoplasm. The UvrABC repair system catalyzes the recognition and processing of DNA lesions. A damage recognition complex composed of 2 UvrA and 2 UvrB subunits scans DNA for abnormalities. Upon binding of the UvrA(2)B(2) complex to a putative damaged site, the DNA wraps around one UvrB monomer. DNA wrap is dependent on ATP binding by UvrB and probably causes local melting of the DNA helix, facilitating insertion of UvrB beta-hairpin between the DNA strands. Then UvrB probes one DNA strand for the presence of a lesion. If a lesion is found the UvrA subunits dissociate and the UvrB-DNA preincision complex is formed. This complex is subsequently bound by UvrC and the second UvrB is released. If no lesion is found, the DNA wraps around the other UvrB subunit that will check the other stand for damage. This chain is UvrABC system protein B, found in Prochlorococcus marinus (strain MIT 9211).